The following is a 261-amino-acid chain: Ribosomal RNA small subunit methyltransferase A (261 aa).

S-adenosyl-L-methionine-binding residues include histidine 13, leucine 15, glycine 40, glutamate 61, aspartate 85, and asparagine 105.

It belongs to the class I-like SAM-binding methyltransferase superfamily. rRNA adenine N(6)-methyltransferase family. RsmA subfamily.

The protein resides in the cytoplasm. It catalyses the reaction adenosine(1518)/adenosine(1519) in 16S rRNA + 4 S-adenosyl-L-methionine = N(6)-dimethyladenosine(1518)/N(6)-dimethyladenosine(1519) in 16S rRNA + 4 S-adenosyl-L-homocysteine + 4 H(+). Its function is as follows. Specifically dimethylates two adjacent adenosines (A1518 and A1519) in the loop of a conserved hairpin near the 3'-end of 16S rRNA in the 30S particle. May play a critical role in biogenesis of 30S subunits. The protein is Ribosomal RNA small subunit methyltransferase A of Flavobacterium johnsoniae (strain ATCC 17061 / DSM 2064 / JCM 8514 / BCRC 14874 / CCUG 350202 / NBRC 14942 / NCIMB 11054 / UW101) (Cytophaga johnsonae).